A 374-amino-acid polypeptide reads, in one-letter code: Putative cullin-like protein 2 (374 aa).

The protein belongs to the cullin family.

This Arabidopsis thaliana (Mouse-ear cress) protein is Putative cullin-like protein 2.